The sequence spans 372 residues: Saccharopine dehydrogenase [NAD(+), L-lysine-forming] (372 aa).

L-saccharopine-binding residues include arginine 17 and lysine 76. The Proton acceptor role is filled by lysine 76. Catalysis depends on histidine 95, which acts as the Proton donor. L-saccharopine is bound at residue glutamine 100. Arginine 129 is a binding site for NAD(+). 2 residues coordinate L-saccharopine: arginine 130 and phenylalanine 134. NAD(+)-binding positions include 202–203, aspartate 226, threonine 230, tyrosine 250, and valine 277; that span reads GR. Cysteine 204 and cysteine 248 are oxidised to a cystine. Residue 278 to 280 coordinates L-saccharopine; it reads SAD. Residue 317 to 320 coordinates NAD(+); that stretch reads IDHL. Positions 370–372 match the Microbody targeting signal motif; sequence SKL.

The protein belongs to the AlaDH/PNT family. In terms of assembly, monomer.

Its subcellular location is the peroxisome. The catalysed reaction is L-saccharopine + NAD(+) + H2O = L-lysine + 2-oxoglutarate + NADH + H(+). It functions in the pathway amino-acid biosynthesis; L-lysine biosynthesis via AAA pathway; L-lysine from L-alpha-aminoadipate (fungal route): step 3/3. Catalyzes the NAD(+)-dependent cleavage of saccharopine to L-lysine and 2-oxoglutarate, the final step in the alpha-aminoadipate (AAA) pathway for lysin biosynthesis. The protein is Saccharopine dehydrogenase [NAD(+), L-lysine-forming] (LYS1) of Candida glabrata (strain ATCC 2001 / BCRC 20586 / JCM 3761 / NBRC 0622 / NRRL Y-65 / CBS 138) (Yeast).